A 208-amino-acid chain; its full sequence is Casparian strip membrane protein 2 (208 aa).

Residues 1–23 are disordered; the sequence is MDSKSGRSESAINIPESNSTKHK. The Cytoplasmic portion of the chain corresponds to 1-46; the sequence is MDSKSGRSESAINIPESNSTKHKSTVVHTATKVAAVAPRGGGWRRG. A compositionally biased stretch (polar residues) spans 8-18; sequence SESAINIPESN. A helical membrane pass occupies residues 47–67; sequence VSIFDFILRICALAAALAATA. The Extracellular portion of the chain corresponds to 68-96; the sequence is TMGTTDQTLPFFTQFFQFQASYDDLPAFT. A helical membrane pass occupies residues 97–117; it reads FFVVANGIASGYLVLSLPFSI. Residues 118-129 lie on the Cytoplasmic side of the membrane; sequence ATIVRPHAAAIK. The chain crosses the membrane as a helical span at residues 130–150; that stretch reads LLLIIFDTVMVAFTAAAAAAA. Topologically, residues 151 to 184 are extracellular; the sequence is AAIVYLAHNGNSKTNWFAICQQFNDFCQRVSGAV. Residues 185-205 traverse the membrane as a helical segment; sequence VASFVAAVILIFLVVLSAVAI. Residues 206-208 are Cytoplasmic-facing; that stretch reads RKH.

This sequence belongs to the Casparian strip membrane proteins (CASP) family. Homodimer and heterodimers.

The protein resides in the cell membrane. Regulates membrane-cell wall junctions and localized cell wall deposition. Required for establishment of the Casparian strip membrane domain (CSD) and the subsequent formation of Casparian strips, a cell wall modification of the root endodermis that determines an apoplastic barrier between the intraorganismal apoplasm and the extraorganismal apoplasm and prevents lateral diffusion. The chain is Casparian strip membrane protein 2 from Triphysaria pusilla (Dwarf owl's-clover).